We begin with the raw amino-acid sequence, 97 residues long: Putative septation protein SpoVG (97 aa).

The protein belongs to the SpoVG family.

Could be involved in septation. This is Putative septation protein SpoVG from Anaeromyxobacter sp. (strain Fw109-5).